The primary structure comprises 426 residues: Histidinol dehydrogenase (426 aa).

NAD(+) contacts are provided by Y126, Q188, and N210. Residues S233, Q255, and H258 each coordinate substrate. Zn(2+) is bound by residues Q255 and H258. Catalysis depends on proton acceptor residues E323 and H324. Substrate-binding residues include H324, D357, E411, and H416. A Zn(2+)-binding site is contributed by D357. H416 contributes to the Zn(2+) binding site.

It belongs to the histidinol dehydrogenase family. Zn(2+) is required as a cofactor.

The catalysed reaction is L-histidinol + 2 NAD(+) + H2O = L-histidine + 2 NADH + 3 H(+). The protein operates within amino-acid biosynthesis; L-histidine biosynthesis; L-histidine from 5-phospho-alpha-D-ribose 1-diphosphate: step 9/9. Catalyzes the sequential NAD-dependent oxidations of L-histidinol to L-histidinaldehyde and then to L-histidine. In Heliobacterium mobile (Heliobacillus mobilis), this protein is Histidinol dehydrogenase.